A 298-amino-acid polypeptide reads, in one-letter code: Probable GTP 3',8-cyclase (298 aa).

A Radical SAM core domain is found at 4–227; the sequence is RYGREIRSFR…MQNRKKYVID (224 aa). R13 serves as a coordination point for GTP. Residues C20 and C24 each contribute to the [4Fe-4S] cluster site. Y26 lines the S-adenosyl-L-methionine pocket. C27 provides a ligand contact to [4Fe-4S] cluster. K61 serves as a coordination point for GTP. G65 provides a ligand contact to S-adenosyl-L-methionine. T91 contacts GTP. S115 contributes to the S-adenosyl-L-methionine binding site. K152 lines the GTP pocket. Residues C243 and C246 each contribute to the [4Fe-4S] cluster site. Position 248-250 (248-250) interacts with GTP; the sequence is RIR. C260 contacts [4Fe-4S] cluster.

The protein belongs to the radical SAM superfamily. MoaA family. It depends on [4Fe-4S] cluster as a cofactor.

It catalyses the reaction GTP + AH2 + S-adenosyl-L-methionine = (8S)-3',8-cyclo-7,8-dihydroguanosine 5'-triphosphate + 5'-deoxyadenosine + L-methionine + A + H(+). The protein operates within cofactor biosynthesis; molybdopterin biosynthesis. Its function is as follows. Catalyzes the cyclization of GTP to (8S)-3',8-cyclo-7,8-dihydroguanosine 5'-triphosphate. The chain is Probable GTP 3',8-cyclase from Methanococcus maripaludis (strain C6 / ATCC BAA-1332).